The chain runs to 929 residues: Bifunctional uridylyltransferase/uridylyl-removing enzyme (929 aa).

The tract at residues 1 to 383 (MDSVTTEHKQ…RPTPAKRRVP (383 aa)) is uridylyltransferase. The interval 384 to 739 (DSDDFIVDNN…VGFDEVRGVT (356 aa)) is uridylyl-removing. The 124-residue stretch at 499-622 (VDEHLIRCVG…VQSVEQMKLL (124 aa)) folds into the HD domain. ACT domains follow at residues 740-822 (ELTI…VVAR) and 850-927 (VIEV…AVQP).

It belongs to the GlnD family. Mg(2+) serves as cofactor.

It catalyses the reaction [protein-PII]-L-tyrosine + UTP = [protein-PII]-uridylyl-L-tyrosine + diphosphate. The enzyme catalyses [protein-PII]-uridylyl-L-tyrosine + H2O = [protein-PII]-L-tyrosine + UMP + H(+). Its activity is regulated as follows. Uridylyltransferase (UTase) activity is inhibited by glutamine, while glutamine activates uridylyl-removing (UR) activity. Its function is as follows. Modifies, by uridylylation and deuridylylation, the PII regulatory proteins (GlnB and homologs), in response to the nitrogen status of the cell that GlnD senses through the glutamine level. Under low glutamine levels, catalyzes the conversion of the PII proteins and UTP to PII-UMP and PPi, while under higher glutamine levels, GlnD hydrolyzes PII-UMP to PII and UMP (deuridylylation). Thus, controls uridylylation state and activity of the PII proteins, and plays an important role in the regulation of nitrogen fixation and metabolism. The sequence is that of Bifunctional uridylyltransferase/uridylyl-removing enzyme from Bradyrhizobium diazoefficiens (strain JCM 10833 / BCRC 13528 / IAM 13628 / NBRC 14792 / USDA 110).